Consider the following 109-residue polypeptide: Hainantoxin-XVIII-5 (109 aa).

The first 18 residues, 1–18, serve as a signal peptide directing secretion; sequence MKLSIIIIATSLVIAVVA. Residues 19 to 46 constitute a propeptide that is removed on maturation; it reads FPSKDSKAIENDKTEQRMEIVVQETARA. 4 disulfides stabilise this stretch: cysteine 47–cysteine 62, cysteine 55–cysteine 68, cysteine 59–cysteine 108, and cysteine 61–cysteine 81.

It belongs to the neurotoxin 25 family. F7 subfamily. As to expression, expressed by the venom gland.

It is found in the secreted. In terms of biological role, putative ion channel inhibitor. This chain is Hainantoxin-XVIII-5, found in Cyriopagopus hainanus (Chinese bird spider).